Reading from the N-terminus, the 445-residue chain is Tubulin beta chain (445 aa).

GTP is bound by residues Gln-11, Glu-69, Ser-138, Gly-142, Thr-143, Gly-144, Asn-204, and Asn-226. Glu-69 contributes to the Mg(2+) binding site.

The protein belongs to the tubulin family. In terms of assembly, dimer of alpha and beta chains. A typical microtubule is a hollow water-filled tube with an outer diameter of 25 nm and an inner diameter of 15 nM. Alpha-beta heterodimers associate head-to-tail to form protofilaments running lengthwise along the microtubule wall with the beta-tubulin subunit facing the microtubule plus end conferring a structural polarity. Microtubules usually have 13 protofilaments but different protofilament numbers can be found in some organisms and specialized cells. Mg(2+) serves as cofactor.

Its subcellular location is the cytoplasm. It is found in the cytoskeleton. Functionally, tubulin is the major constituent of microtubules, a cylinder consisting of laterally associated linear protofilaments composed of alpha- and beta-tubulin heterodimers. Microtubules grow by the addition of GTP-tubulin dimers to the microtubule end, where a stabilizing cap forms. Below the cap, tubulin dimers are in GDP-bound state, owing to GTPase activity of alpha-tubulin. The chain is Tubulin beta chain from Leishmania mexicana.